The sequence spans 251 residues: Putative fatty acid elongase DDB_G0274669 (251 aa).

A run of 5 helical transmembrane segments spans residues 51-71 (FQIIPIVLVIYLVTIFSIKFL), 82-102 (FISILHNAILCIWSLIMCVGV), 135-155 (WSYIFYISKFYELLDTVIIVL), 177-197 (YITMIQILQFVCLGIAGVLHV), and 211-231 (AFAAAYSINFSFLFLFSKFFV).

It belongs to the ELO family.

It is found in the membrane. The catalysed reaction is a very-long-chain acyl-CoA + malonyl-CoA + H(+) = a very-long-chain 3-oxoacyl-CoA + CO2 + CoA. Could be implicated in synthesis of very long chain fatty acids. The polypeptide is Putative fatty acid elongase DDB_G0274669 (Dictyostelium discoideum (Social amoeba)).